Consider the following 702-residue polypeptide: Elongation factor G (702 aa).

Positions 8 to 286 (DKVRNIGIIA…AVVEYLPSPL (279 aa)) constitute a tr-type G domain. Residues 17 to 24 (AHIDAGKT), 85 to 89 (DTPGH), and 139 to 142 (NKMD) contribute to the GTP site.

This sequence belongs to the TRAFAC class translation factor GTPase superfamily. Classic translation factor GTPase family. EF-G/EF-2 subfamily.

Its subcellular location is the cytoplasm. Catalyzes the GTP-dependent ribosomal translocation step during translation elongation. During this step, the ribosome changes from the pre-translocational (PRE) to the post-translocational (POST) state as the newly formed A-site-bound peptidyl-tRNA and P-site-bound deacylated tRNA move to the P and E sites, respectively. Catalyzes the coordinated movement of the two tRNA molecules, the mRNA and conformational changes in the ribosome. The chain is Elongation factor G from Chloroflexus aurantiacus (strain ATCC 29366 / DSM 635 / J-10-fl).